The chain runs to 207 residues: Ribosomal RNA large subunit methyltransferase E (207 aa).

S-adenosyl-L-methionine contacts are provided by Gly60, Trp62, Asp80, Asp96, and Asp121. Lys161 (proton acceptor) is an active-site residue.

The protein belongs to the class I-like SAM-binding methyltransferase superfamily. RNA methyltransferase RlmE family.

It localises to the cytoplasm. The catalysed reaction is uridine(2552) in 23S rRNA + S-adenosyl-L-methionine = 2'-O-methyluridine(2552) in 23S rRNA + S-adenosyl-L-homocysteine + H(+). Specifically methylates the uridine in position 2552 of 23S rRNA at the 2'-O position of the ribose in the fully assembled 50S ribosomal subunit. This is Ribosomal RNA large subunit methyltransferase E from Pseudomonas aeruginosa (strain UCBPP-PA14).